We begin with the raw amino-acid sequence, 143 residues long: MAKKVAGQLKLQVKAGSANPSPPIGPALGQRGINIMEFCKAFNAATQEMEKGMPIPVVITYYQDKSFTFAMKQPPMTYWLKKEAKITSGSKTPGKGAKVGSITKAQVKTIAEAKMKDLNAADIEGAMAMVEGSARAMGLEVVG.

It belongs to the universal ribosomal protein uL11 family. As to quaternary structure, part of the ribosomal stalk of the 50S ribosomal subunit. Interacts with L10 and the large rRNA to form the base of the stalk. L10 forms an elongated spine to which 2 L12 dimers bind in a sequential fashion forming a pentameric L10(L12)2(L12)2 complex. In terms of processing, one or more lysine residues are methylated.

Forms part of the ribosomal stalk which helps the ribosome interact with GTP-bound translation factors. This chain is Large ribosomal subunit protein uL11, found in Agrobacterium fabrum (strain C58 / ATCC 33970) (Agrobacterium tumefaciens (strain C58)).